A 101-amino-acid polypeptide reads, in one-letter code: Small ribosomal subunit protein uS14A (101 aa).

The interval 31-69 (IAAPGSSPEERAAAQQELRRQPRDASATRLRNRDAVDGR) is disordered. The segment covering 38–53 (PEERAAAQQELRRQPR) has biased composition (basic and acidic residues).

It belongs to the universal ribosomal protein uS14 family. Part of the 30S ribosomal subunit. Contacts proteins S3 and S10.

Functionally, binds 16S rRNA, required for the assembly of 30S particles and may also be responsible for determining the conformation of the 16S rRNA at the A site. The protein is Small ribosomal subunit protein uS14A of Saccharopolyspora erythraea (strain ATCC 11635 / DSM 40517 / JCM 4748 / NBRC 13426 / NCIMB 8594 / NRRL 2338).